The chain runs to 179 residues: Transcription factor NF-E4 (179 aa).

Lys-43 is subject to N6-acetyllysine. The segment at 100-179 (AMKATGPHNA…QLPSLHLSQG (80 aa)) is disordered. Polar residues-rich tracts occupy residues 143 to 153 (LSQSNPPTRIS) and 163 to 179 (ALEQ…LSQG).

In terms of assembly, component of the SSP (stage selector protein) complex, which appears to be a heteromer of TFCP2 and 2 copies of NFE4. Interacts with HDAC1 and PCAF. Isoform 2 interacts with TFCP2. In terms of processing, acetylation at Lys-43 prolongs the protein half-life by preventing ubiquitin-mediated degradation and reduces the interaction between NF-E4 and HDAC1, potentially maximizing the activating ability of the factor at the gamma-promoter. Ubiquitinated; leading to its degradation by the proteasome. Acetylation at Lys-43 prevents ubiquitination. As to expression, specifically expressed in fetal liver, cord blood and bone marrow. Also expressed in the K562 and HEL cell lines, which constitutively express the fetal globin genes.

It is found in the nucleus. Its function is as follows. Functions as part of the SSP (stage selector protein) complex, a complex that contributes to the preferential expression of the gamma-gene in fetal erythroid cells by facilitating the interaction of the gamma-globin genes with enhancer elements contained in the locus control region (LCR). The complex binds to the stage selector element (SSE) in the proximal gamma-globin promoter. In contrast, isoform 2 acts as a repressor of gamma-globin gene expression by preventing NFE2 and RNA polymerase II recruitment to the promoter. The sequence is that of Transcription factor NF-E4 (NFE4) from Homo sapiens (Human).